The primary structure comprises 242 residues: ATP-dependent dethiobiotin synthetase BioD (242 aa).

12–17 (EVGKTV) is a binding site for ATP. Thr-16 lines the Mg(2+) pocket. Residue Lys-37 is part of the active site. Substrate is bound at residue Ser-41. Residues Asp-51 and 112-115 (EGAG) each bind ATP. Residues Asp-51 and Glu-112 each contribute to the Mg(2+) site.

Belongs to the dethiobiotin synthetase family. In terms of assembly, homodimer. Requires Mg(2+) as cofactor.

Its subcellular location is the cytoplasm. The catalysed reaction is (7R,8S)-7,8-diammoniononanoate + CO2 + ATP = (4R,5S)-dethiobiotin + ADP + phosphate + 3 H(+). It functions in the pathway cofactor biosynthesis; biotin biosynthesis; biotin from 7,8-diaminononanoate: step 1/2. Its function is as follows. Catalyzes a mechanistically unusual reaction, the ATP-dependent insertion of CO2 between the N7 and N8 nitrogen atoms of 7,8-diaminopelargonic acid (DAPA, also called 7,8-diammoniononanoate) to form a ureido ring. In Bacillus anthracis (strain A0248), this protein is ATP-dependent dethiobiotin synthetase BioD.